Consider the following 221-residue polypeptide: Urease accessory protein UreF (221 aa).

Belongs to the UreF family. In terms of assembly, ureD, UreF and UreG form a complex that acts as a GTP-hydrolysis-dependent molecular chaperone, activating the urease apoprotein by helping to assemble the nickel containing metallocenter of UreC. The UreE protein probably delivers the nickel.

It is found in the cytoplasm. Functionally, required for maturation of urease via the functional incorporation of the urease nickel metallocenter. The sequence is that of Urease accessory protein UreF from Aliivibrio fischeri (strain ATCC 700601 / ES114) (Vibrio fischeri).